The sequence spans 245 residues: Small ribosomal subunit protein uS3 (245 aa).

The region spanning 39–108 (IRNYIKKNYY…SVFVNVQEVK (70 aa)) is the KH type-2 domain.

Belongs to the universal ribosomal protein uS3 family. Part of the 30S ribosomal subunit. Forms a tight complex with proteins S10 and S14.

Binds the lower part of the 30S subunit head. Binds mRNA in the 70S ribosome, positioning it for translation. This Dictyoglomus turgidum (strain DSM 6724 / Z-1310) protein is Small ribosomal subunit protein uS3.